The following is a 257-amino-acid chain: UPF0259 membrane protein WIGBR3650 (257 aa).

6 helical membrane-spanning segments follow: residues 23–43, 89–109, 122–142, 148–168, 190–210, and 223–243; these read IIFFSTISAIISSLINYIFLP, LSSLVGNAFLFSNIITMINTI, IILSSSLIPKFLTLIFLISFL, ALMLIPGIIVLIFLSFSPILI, IKTVAPIIFLWLLIKLIILVI, and VKIFFYLINNIITVYIIIYMY.

The protein belongs to the UPF0259 family.

It is found in the cell membrane. In Wigglesworthia glossinidia brevipalpis, this protein is UPF0259 membrane protein WIGBR3650.